The sequence spans 808 residues: MSKNERMVGISRRTLVKSTAIGSLALAAGGFSLPFTLRNAAAAVQQAREKVVWGACSVNCGSRCALRLHVKDNEVTWVETDNTGSDEYGNHQVRACLRGRSIRRRINHPDRLNYPMKRVGKRGEGKFERISWDEALDTIASSLKKTVEQYGNEAVYIQYSSGIVGGNMTRSSPSASAVKRLMNCYGGSLNQYGSYSTAQISCAMPYTYGSNDGNSTTDIENSKLVVMFGNNPAETRMSGGGITYLLEKAREKSNAKMIVIDPRYTDTAAGREDEWLPIRPGTDAALVAGIAWVLINENLVDQPFLDKYCVGYDEKTLPADAPKNGHYKAYILGEGDDKTAKTPQWASQITGIPEDRIIKLAREIGTAKPAYICQGWGPQRQANGELTARAIAMLPILTGNVGISGGNSGARESTYTITIERLPVLDNPVKTSISCFSWTDAIDHGPQMTAIRDGVRGKDKLDVPIKFIWNYAGNTLVNQHSDINKTHEILQDESKCEMIVVIENFMTSSAKYADILLPDLMTVEQEDIIPNDYAGNMGYLIFLQPVTSEKFERKPIYWILSEVAKRLGPDVYQKFTEGRTQEQWLQHLYAKMLAKDPALPSYDELKKMGIYKRKDPNGHFVAYKAFRDDPEANPLKTPSGKIEIYSSRLAEIARTWELEKDEVISPLPVYASTFEGWNSPERRTFPLQLFGFHYKSRTHSTYGNIDLLKAACRQEVWINPIDAQKRGIANGDMVRVFNHRGEVRLPAKVTPRILPGVSAMGQGAWHEANMSGDKIDHGGCVNTLTTLRPSPLAKGNPQHTNLVEIEKI.

Residues 1 to 43 constitute a signal peptide (tat-type signal); it reads MSKNERMVGISRRTLVKSTAIGSLALAAGGFSLPFTLRNAAAA. Positions 49–110 constitute a 4Fe-4S Mo/W bis-MGD-type domain; it reads EKVVWGACSV…SIRRRINHPD (62 aa). Residues C56, C60, C64, and C96 each coordinate [4Fe-4S] cluster. Residue S196 participates in Mo-bis(molybdopterin guanine dinucleotide) binding.

Belongs to the prokaryotic molybdopterin-containing oxidoreductase family. [4Fe-4S] cluster is required as a cofactor. Mo-bis(molybdopterin guanine dinucleotide) serves as cofactor. Post-translationally, exported by the Tat system. The position of the signal peptide cleavage has not been experimentally proven.

It localises to the cell membrane. Functionally, terminal reductase during anaerobic growth on various sulfoxide and N-oxide compounds. This chain is Putative dimethyl sulfoxide reductase chain YnfE (ynfE), found in Escherichia coli (strain K12).